Consider the following 500-residue polypeptide: Ribose import ATP-binding protein RbsA (500 aa).

2 ABC transporter domains span residues 3 to 239 (IEMK…VGRE) and 246 to 493 (DRTP…TGGV). Position 35 to 42 (35 to 42 (GENGAGKS)) interacts with ATP.

It belongs to the ABC transporter superfamily. Ribose importer (TC 3.A.1.2.1) family. In terms of assembly, the complex is composed of an ATP-binding protein (RbsA), two transmembrane proteins (RbsC) and a solute-binding protein (RbsB).

It localises to the cell membrane. It catalyses the reaction D-ribose(out) + ATP + H2O = D-ribose(in) + ADP + phosphate + H(+). Its function is as follows. Part of the ABC transporter complex RbsABC involved in ribose import. Responsible for energy coupling to the transport system. The chain is Ribose import ATP-binding protein RbsA from Lacticaseibacillus paracasei (strain ATCC 334 / BCRC 17002 / CCUG 31169 / CIP 107868 / KCTC 3260 / NRRL B-441) (Lactobacillus paracasei).